Consider the following 129-residue polypeptide: Small ribosomal subunit protein uS11 (129 aa).

The protein belongs to the universal ribosomal protein uS11 family. Part of the 30S ribosomal subunit. Interacts with proteins S7 and S18. Binds to IF-3.

Its function is as follows. Located on the platform of the 30S subunit, it bridges several disparate RNA helices of the 16S rRNA. Forms part of the Shine-Dalgarno cleft in the 70S ribosome. In Jannaschia sp. (strain CCS1), this protein is Small ribosomal subunit protein uS11.